A 115-amino-acid polypeptide reads, in one-letter code: NADH-ubiquinone oxidoreductase chain 3 (115 aa).

The next 3 membrane-spanning stretches (helical) occupy residues Leu3–Trp23, Phe55–Leu75, and Leu86–Trp106.

It belongs to the complex I subunit 3 family. As to quaternary structure, core subunit of respiratory chain NADH dehydrogenase (Complex I) which is composed of 45 different subunits. Interacts with TMEM186. Interacts with TMEM242.

Its subcellular location is the mitochondrion inner membrane. It catalyses the reaction a ubiquinone + NADH + 5 H(+)(in) = a ubiquinol + NAD(+) + 4 H(+)(out). Core subunit of the mitochondrial membrane respiratory chain NADH dehydrogenase (Complex I) which catalyzes electron transfer from NADH through the respiratory chain, using ubiquinone as an electron acceptor. Essential for the catalytic activity of complex I. In Loxodonta africana (African elephant), this protein is NADH-ubiquinone oxidoreductase chain 3.